The following is a 202-amino-acid chain: MEKNKSTAIEIAESSKESKGKAPLLAAAVGHDRAAGYKRGVSIFDLFLRISAATAALAATIVMGTTEQTLPFFTQFFQFRAQYDDLPTFTFFVVGMAIVTGYLILSVPFSIVCIARPVAIGPRFLLIVGDTLKAVLATSAAGSSAAIVYLAHNGNSDANWLDICQQFNDFCQRVSGAVVAAFVAVVLLIFLIVLSAMALRKN.

The Cytoplasmic segment spans residues 1–42; that stretch reads MEKNKSTAIEIAESSKESKGKAPLLAAAVGHDRAAGYKRGVS. A helical membrane pass occupies residues 43–63; that stretch reads IFDLFLRISAATAALAATIVM. The Extracellular portion of the chain corresponds to 64–90; sequence GTTEQTLPFFTQFFQFRAQYDDLPTFT. The helical transmembrane segment at 91 to 111 threads the bilayer; sequence FFVVGMAIVTGYLILSVPFSI. Topologically, residues 112–130 are cytoplasmic; sequence VCIARPVAIGPRFLLIVGD. A helical transmembrane segment spans residues 131–151; the sequence is TLKAVLATSAAGSSAAIVYLA. The Extracellular segment spans residues 152 to 173; it reads HNGNSDANWLDICQQFNDFCQR. The chain crosses the membrane as a helical span at residues 174 to 194; it reads VSGAVVAAFVAVVLLIFLIVL. Residues 195–202 lie on the Cytoplasmic side of the membrane; it reads SAMALRKN.

It belongs to the Casparian strip membrane proteins (CASP) family. Homodimer and heterodimers.

The protein resides in the cell membrane. Its function is as follows. Regulates membrane-cell wall junctions and localized cell wall deposition. Required for establishment of the Casparian strip membrane domain (CSD) and the subsequent formation of Casparian strips, a cell wall modification of the root endodermis that determines an apoplastic barrier between the intraorganismal apoplasm and the extraorganismal apoplasm and prevents lateral diffusion. In Striga hermonthica (Purple witchweed), this protein is Casparian strip membrane protein 1.